We begin with the raw amino-acid sequence, 532 residues long: Protein DETOXIFICATION 51 (532 aa).

Transmembrane regions (helical) follow at residues 65–85 (FPIA…MFFL), 98–118 (LAIA…ALGM), 142–162 (VVFL…VGKI), 176–196 (AQTY…LHPI), 208–228 (PVTL…LFLV), 238–258 (VAVA…CYVW), 290–310 (VSVC…GLLV), 316–336 (VAAM…PSSL), 358–378 (LTAT…AAFA), 395–415 (ILQL…GNCP), 439–459 (AFYL…GIGF), and 461–481 (GLWV…MYVV).

This sequence belongs to the multi antimicrobial extrusion (MATE) (TC 2.A.66.1) family. In terms of tissue distribution, expressed in the meristematic regions. Mainly detected in tissues where cells were actively dividing, such as leaf primordia and young leaves, the junction between lateral root and the primary root, root cap, hydathodes, the junction between secondary inflorescence and the main inflorescence, young stamen and young siliques. Highly expressed at the junction between the hypocotyl and the root, and at the marginal areas of cotyledons and true leaves, coinciding with the locations of the hydathode. Also highly expressed at the basal regions of the newly emerged lateral roots. In the floral organs, mostly expressed at the style of the pistil.

It localises to the endosome membrane. The protein localises to the late endosome membrane. In terms of biological role, functions as a multidrug and toxin extrusion transporter that negatively regulates plant disease resistance. Plays an important role in maintaining normal plant architecture, possibly by regulating local auxin biosynthesis. May act as a negative regulator of hypocotyl cell elongation in the light. The chain is Protein DETOXIFICATION 51 from Arabidopsis thaliana (Mouse-ear cress).